The following is a 227-amino-acid chain: Transcription antitermination protein NusB (227 aa).

2 disordered regions span residues 165 to 189 (ASES…SDED) and 201 to 227 (AEET…ADES). Composition is skewed to acidic residues over residues 178 to 189 (DDSDALDDSDED) and 201 to 214 (AEET…AEDS). Over residues 215-227 (EVSKVSEEKADES) the composition is skewed to basic and acidic residues.

Belongs to the NusB family.

Involved in transcription antitermination. Required for transcription of ribosomal RNA (rRNA) genes. Binds specifically to the boxA antiterminator sequence of the ribosomal RNA (rrn) operons. This chain is Transcription antitermination protein NusB, found in Corynebacterium glutamicum (strain ATCC 13032 / DSM 20300 / JCM 1318 / BCRC 11384 / CCUG 27702 / LMG 3730 / NBRC 12168 / NCIMB 10025 / NRRL B-2784 / 534).